Consider the following 577-residue polypeptide: Arginine--tRNA ligase (577 aa).

The short motif at 132-142 (ANPTGPLHVGH) is the 'HIGH' region element.

Belongs to the class-I aminoacyl-tRNA synthetase family. As to quaternary structure, monomer.

The protein resides in the cytoplasm. The enzyme catalyses tRNA(Arg) + L-arginine + ATP = L-arginyl-tRNA(Arg) + AMP + diphosphate. This is Arginine--tRNA ligase from Pelagibacter ubique (strain HTCC1062).